Consider the following 239-residue polypeptide: Probable transcriptional regulatory protein BLi00754/BL02339 (239 aa).

The protein belongs to the TACO1 family. YeeN subfamily.

The protein resides in the cytoplasm. In Bacillus licheniformis (strain ATCC 14580 / DSM 13 / JCM 2505 / CCUG 7422 / NBRC 12200 / NCIMB 9375 / NCTC 10341 / NRRL NRS-1264 / Gibson 46), this protein is Probable transcriptional regulatory protein BLi00754/BL02339.